We begin with the raw amino-acid sequence, 92 residues long: Acyl-CoA-binding protein (92 aa).

The ACB domain maps to 3 to 88 (LKEDFEEHAE…VKQLLEAEAS (86 aa)). Residues 30-34 (YGLYK), Lys56, and Tyr75 each bind an acyl-CoA.

Belongs to the ACBP family.

In terms of biological role, binds medium- and long-chain acyl-CoA esters with very high affinity and may function as an intracellular carrier of acyl-CoA esters. This is Acyl-CoA-binding protein from Brassica napus (Rape).